A 149-amino-acid polypeptide reads, in one-letter code: Transcriptional repressor NrdR (149 aa).

A zinc finger spans residues 3-34; it reads CPFCGTQDTKVIDSRLVADGASVRRRRECNHC. Residues 49-139 form the ATP-cone domain; the sequence is PRVIKTDGSR…VYRSFEDIRE (91 aa).

Belongs to the NrdR family. Requires Zn(2+) as cofactor.

Its function is as follows. Negatively regulates transcription of bacterial ribonucleotide reductase nrd genes and operons by binding to NrdR-boxes. The chain is Transcriptional repressor NrdR from Idiomarina loihiensis (strain ATCC BAA-735 / DSM 15497 / L2-TR).